Here is a 644-residue protein sequence, read N- to C-terminus: Macrolide export ATP-binding/permease protein MacB (644 aa).

The region spanning 4–242 is the ABC transporter domain; it reads IECKNINRYF…SNVGRIQEKA (239 aa). Position 40–47 (40–47) interacts with ATP; it reads GQSGSGKS. The next 4 helical transmembrane spans lie at 270–290, 524–544, 574–594, and 607–627; these read LLTMLGIIIGIASVVSVVALG, IALISLVVGGIGVMNIMLVSV, LICIIGGLVGVGLSAAVSLVF, and AASVIGAVACSTGIGIAFGFM.

It belongs to the ABC transporter superfamily. Macrolide exporter (TC 3.A.1.122) family. Homodimer.

It localises to the cell inner membrane. Its function is as follows. Non-canonical ABC transporter that contains transmembrane domains (TMD), which form a pore in the inner membrane, and an ATP-binding domain (NBD), which is responsible for energy generation. Overexpression confers resistance against macrolides. The chain is Macrolide export ATP-binding/permease protein MacB from Neisseria gonorrhoeae.